The sequence spans 559 residues: Formate--tetrahydrofolate ligase (559 aa).

ATP is bound at residue 67–74 (TPAGEGKS).

The protein belongs to the formate--tetrahydrofolate ligase family.

It catalyses the reaction (6S)-5,6,7,8-tetrahydrofolate + formate + ATP = (6R)-10-formyltetrahydrofolate + ADP + phosphate. It functions in the pathway one-carbon metabolism; tetrahydrofolate interconversion. The chain is Formate--tetrahydrofolate ligase from Lactobacillus delbrueckii subsp. bulgaricus (strain ATCC 11842 / DSM 20081 / BCRC 10696 / JCM 1002 / NBRC 13953 / NCIMB 11778 / NCTC 12712 / WDCM 00102 / Lb 14).